The following is a 309-amino-acid chain: Large ribosomal subunit protein mL45 (309 aa).

Belongs to the mitochondrion-specific ribosomal protein mL45 family. Component of the mitochondrial ribosome large subunit (39S) which comprises a 16S rRNA and about 50 distinct proteins.

It localises to the mitochondrion. Its function is as follows. Component of the mitochondrial large ribosomal subunit (mt-LSU). Within the mitochondrial ribosomes, required to direct the nascent polypeptide toward the tunnel exit and position the exit at a distance from the membrane surface. In Xenopus laevis (African clawed frog), this protein is Large ribosomal subunit protein mL45 (mrpl45).